The chain runs to 630 residues: ATP-dependent zinc metalloprotease FtsH (630 aa).

Residues 1 to 7 (MNNFMKN) are Cytoplasmic-facing. The helical transmembrane segment at 8–28 (IGFYLVLIALSILVAQFFVDT) threads the bilayer. Residues 29–111 (DVNTIVDTDV…KTEPEPTAPW (83 aa)) lie on the Periplasmic side of the membrane. A helical membrane pass occupies residues 112–132 (WTGMLAYILPIILLIGAWFFI). The Cytoplasmic segment spans residues 133-630 (MQRMQGGGSQ…ENREHENNDK (498 aa)). ATP is bound at residue 203–210 (GPPGTGKT). Histidine 425 lines the Zn(2+) pocket. Residue glutamate 426 is part of the active site. Positions 429 and 501 each coordinate Zn(2+). Residues 601–630 (KLIKGEPLDDDSIDNSTDENENREHENNDK) form a disordered region. The segment covering 608–619 (LDDDSIDNSTDE) has biased composition (acidic residues). The segment covering 620 to 630 (NENREHENNDK) has biased composition (basic and acidic residues).

It in the central section; belongs to the AAA ATPase family. In the C-terminal section; belongs to the peptidase M41 family. As to quaternary structure, homohexamer. Zn(2+) is required as a cofactor.

It localises to the cell inner membrane. Functionally, acts as a processive, ATP-dependent zinc metallopeptidase for both cytoplasmic and membrane proteins. Plays a role in the quality control of integral membrane proteins. This chain is ATP-dependent zinc metalloprotease FtsH, found in Halothermothrix orenii (strain H 168 / OCM 544 / DSM 9562).